Here is a 66-residue protein sequence, read N- to C-terminus: Large ribosomal subunit protein bL33c (66 aa).

This sequence belongs to the bacterial ribosomal protein bL33 family.

The protein resides in the plastid. Its subcellular location is the chloroplast. This chain is Large ribosomal subunit protein bL33c, found in Jasminum nudiflorum (Winter jasmine).